Consider the following 601-residue polypeptide: Elongation factor 4 (601 aa).

Residues 5-187 form the tr-type G domain; the sequence is SNIRNFAIIA…AIVTKLPSPN (183 aa). GTP contacts are provided by residues 17–22 and 134–137; these read DHGKST and NKID.

It belongs to the TRAFAC class translation factor GTPase superfamily. Classic translation factor GTPase family. LepA subfamily.

The protein resides in the cell inner membrane. The enzyme catalyses GTP + H2O = GDP + phosphate + H(+). Functionally, required for accurate and efficient protein synthesis under certain stress conditions. May act as a fidelity factor of the translation reaction, by catalyzing a one-codon backward translocation of tRNAs on improperly translocated ribosomes. Back-translocation proceeds from a post-translocation (POST) complex to a pre-translocation (PRE) complex, thus giving elongation factor G a second chance to translocate the tRNAs correctly. Binds to ribosomes in a GTP-dependent manner. This is Elongation factor 4 from Orientia tsutsugamushi (strain Ikeda) (Rickettsia tsutsugamushi).